Reading from the N-terminus, the 383-residue chain is Acetyl-CoA acetyltransferase (383 aa).

The active-site Acyl-thioester intermediate is the Cys85. Positions 206, 207, 209, and 328 each coordinate CoA. His332 (proton acceptor) is an active-site residue.

The protein belongs to the thiolase-like superfamily. Thiolase family. In terms of assembly, interacts with HMG-CoA synthase (HMGCS) that catalyzes the second step in the pathway and with a DUF35 protein. The acetoacetyl-CoA thiolase/HMG-CoA synthase complex channels the intermediate via a fused CoA-binding site, which allows for efficient coupling of the endergonic thiolase reaction with the exergonic HMGCS reaction.

The enzyme catalyses 2 acetyl-CoA = acetoacetyl-CoA + CoA. It functions in the pathway metabolic intermediate biosynthesis; (R)-mevalonate biosynthesis; (R)-mevalonate from acetyl-CoA: step 1/3. Catalyzes the condensation of two acetyl-coA molecules into acetoacetyl-CoA. Functions in the mevalonate (MVA) pathway leading to isopentenyl diphosphate (IPP), a key precursor for the biosynthesis of isoprenoid compounds that are building blocks of archaeal membrane lipids. This is Acetyl-CoA acetyltransferase from Methanothermobacter thermautotrophicus (strain ATCC 29096 / DSM 1053 / JCM 10044 / NBRC 100330 / Delta H) (Methanobacterium thermoautotrophicum).